The following is a 1133-amino-acid chain: RNA-dependent RNA polymerase 2 (1133 aa).

Mg(2+) contacts are provided by aspartate 830, aspartate 832, and aspartate 834.

The protein belongs to the RdRP family. Interacts with NRPD1 and SHH1. Associates with Pol IV complex, forming an interpolymerase channel bridging their active sites, through which the Pol IV-generated transcript is handed over to the RDR2 active site after being backtracked, where it is used as the template for double-stranded RNA (dsRNA) synthesis. Interacts with JMJ24.

The protein resides in the nucleus. It localises to the nucleoplasm. It is found in the nucleolus. It carries out the reaction RNA(n) + a ribonucleoside 5'-triphosphate = RNA(n+1) + diphosphate. Functionally, RNA-dependent direct polymerase involved in the production of small interfering RNAs (siRNAs). Binds to single-stranded RNA (ssRNA); engages ssRNAs longer than 7 nucleotides and initiates internal to their 3' ends. Able to transcribe the RNA of an RNA/DNA hybrid, the transcript produced by Pol IV, if its 3' end is accessible, to generate double-stranded small interfering RNAs (dsRNAs) precursor essential for establishing and maintaining DNA methylation. Required for the biogenesis of endogenous siRNAs of 24 nucleotide which derive from heterochromatin and DNA repeats such as transposons or endogenous gene tandem repeats, such as repeats present in FWA gene. Involved in transcriptional gene silencing (TGS). Component of the RNA-directed DNA methylation (RdDM) silencing pathway that utilizes siRNAs to guide DNA methyltransferases to asymmetric cytosines. Involved in control of flowering time through RdDM of FWA locus. Required for reception of long-distance mRNA silencing in the shoot. Required for the formation of telomeric siRNAs and the RNA-dependent DNA methylation of asymmetric cytosines in telomeric (5'-CCCTAAA-3') repeats. In Arabidopsis thaliana (Mouse-ear cress), this protein is RNA-dependent RNA polymerase 2.